The primary structure comprises 591 residues: Protein phosphatase EYA1 (591 aa).

Disordered regions lie at residues 1–95 (MEMQ…SYPH), 150–169 (GLSQSQSPGQTGFLSYGTSF), and 239–319 (MTSS…PDSD). Positions 8 to 23 (SPHSRLSGSSESPSGP) are enriched in low complexity. Over residues 28-53 (SHINSTSMTPNGTEVKTEPMSSSEIA) the composition is skewed to polar residues. Residues 56–75 (AADGSLDSFSGSALGSSSFS) show a composition bias toward low complexity. Over residues 78–87 (PAHPFSPPQI) the composition is skewed to pro residues. Residues 240 to 252 (TSSNTSPTTPSTN) show a composition bias toward low complexity. Residues 253 to 286 (ATYQLQEPPSGVTSQAVTDPTAEYSTIHSPSTPI) show a composition bias toward polar residues. The span at 287 to 302 (KETDSERLRRGSDGKS) shows a compositional bias: basic and acidic residues. Asp327 (nucleophile) is an active-site residue. Mg(2+) contacts are provided by Asp327, Asp329, and Asp555. Asp329 serves as the catalytic Proton donor.

Belongs to the HAD-like hydrolase superfamily. EYA family. As to quaternary structure, probably interacts with SIX2, SIX4 and SIX5. Interacts with H2AX in response to DNA damage. Interacts with SIX3; promotes EYA1 translocation to the nucleus. Mg(2+) serves as cofactor. Sumoylated with SUMO1. As to expression, extensively expressed in cranial placodes, branchial arches, CNS and developing eye and nose.

Its subcellular location is the cytoplasm. It is found in the nucleus. It carries out the reaction O-phospho-L-tyrosyl-[protein] + H2O = L-tyrosyl-[protein] + phosphate. The catalysed reaction is O-phospho-L-seryl-[protein] + H2O = L-seryl-[protein] + phosphate. The enzyme catalyses O-phospho-L-threonyl-[protein] + H2O = L-threonyl-[protein] + phosphate. In terms of biological role, functions both as protein phosphatase and as transcriptional coactivator for SIX1, and probably also for SIX2, SIX4 and SIX5. Tyrosine phosphatase that dephosphorylates 'Tyr-142' of histone H2AX (H2AXY142ph) and promotes efficient DNA repair via the recruitment of DNA repair complexes containing MDC1. 'Tyr-142' phosphorylation of histone H2AX plays a central role in DNA repair and acts as a mark that distinguishes between apoptotic and repair responses to genotoxic stress. Its function as histone phosphatase may contribute to its function in transcription regulation during organogenesis. Also has phosphatase activity with proteins phosphorylated on Ser and Thr residues (in vitro). Required for normal embryonic development of the craniofacial and trunk skeleton, kidneys and ears. Together with SIX1, it plays an important role in hypaxial muscle development; in this it is functionally redundant with EYA2. The polypeptide is Protein phosphatase EYA1 (Eya1) (Mus musculus (Mouse)).